The primary structure comprises 432 residues: Glutamate-1-semialdehyde 2,1-aminomutase 2 (432 aa).

Lysine 268 is subject to N6-(pyridoxal phosphate)lysine.

The protein belongs to the class-III pyridoxal-phosphate-dependent aminotransferase family. HemL subfamily. As to quaternary structure, homodimer. Pyridoxal 5'-phosphate serves as cofactor.

The protein resides in the cytoplasm. It catalyses the reaction (S)-4-amino-5-oxopentanoate = 5-aminolevulinate. The protein operates within porphyrin-containing compound metabolism; protoporphyrin-IX biosynthesis; 5-aminolevulinate from L-glutamyl-tRNA(Glu): step 2/2. This chain is Glutamate-1-semialdehyde 2,1-aminomutase 2, found in Listeria monocytogenes serotype 4b (strain CLIP80459).